Consider the following 204-residue polypeptide: MNAYRLYLVTDDQQDLATLKRVVRKAVEGGVTMVQVREKHGDVRAFIERAQAVKDILKDTDVPLIINDRVDVALAVDADGVHLGQSDMPATIARELIGPNKILGLSIENEEQLTEADSLPIDYIGLSAIFATPTKTNTKKHWGIDGLKMALETTSLPIVAIGGINESNIPQLSATGVHGLALVSAICHAEDPKAASEYLLGLMR.

4-amino-2-methyl-5-(diphosphooxymethyl)pyrimidine is bound by residues 35 to 39 (QVREK) and Asn67. The Mg(2+) site is built by Asp68 and Asp87. Ser106 serves as a coordination point for 4-amino-2-methyl-5-(diphosphooxymethyl)pyrimidine. A 2-[(2R,5Z)-2-carboxy-4-methylthiazol-5(2H)-ylidene]ethyl phosphate-binding site is contributed by 132–134 (TPT). Lys135 provides a ligand contact to 4-amino-2-methyl-5-(diphosphooxymethyl)pyrimidine. 2-[(2R,5Z)-2-carboxy-4-methylthiazol-5(2H)-ylidene]ethyl phosphate is bound by residues Gly163 and 183–184 (VS).

This sequence belongs to the thiamine-phosphate synthase family. The cofactor is Mg(2+).

The enzyme catalyses 2-[(2R,5Z)-2-carboxy-4-methylthiazol-5(2H)-ylidene]ethyl phosphate + 4-amino-2-methyl-5-(diphosphooxymethyl)pyrimidine + 2 H(+) = thiamine phosphate + CO2 + diphosphate. The catalysed reaction is 2-(2-carboxy-4-methylthiazol-5-yl)ethyl phosphate + 4-amino-2-methyl-5-(diphosphooxymethyl)pyrimidine + 2 H(+) = thiamine phosphate + CO2 + diphosphate. It catalyses the reaction 4-methyl-5-(2-phosphooxyethyl)-thiazole + 4-amino-2-methyl-5-(diphosphooxymethyl)pyrimidine + H(+) = thiamine phosphate + diphosphate. Its pathway is cofactor biosynthesis; thiamine diphosphate biosynthesis; thiamine phosphate from 4-amino-2-methyl-5-diphosphomethylpyrimidine and 4-methyl-5-(2-phosphoethyl)-thiazole: step 1/1. In terms of biological role, condenses 4-methyl-5-(beta-hydroxyethyl)thiazole monophosphate (THZ-P) and 2-methyl-4-amino-5-hydroxymethyl pyrimidine pyrophosphate (HMP-PP) to form thiamine monophosphate (TMP). The protein is Thiamine-phosphate synthase of Vibrio campbellii (strain ATCC BAA-1116).